The primary structure comprises 566 residues: ATP-dependent RNA helicase DBP3 (566 aa).

Residues 1–139 form a disordered region; it reads MSAGKKHARD…TTPNGSAQRN (139 aa). A compositionally biased stretch (basic residues) spans 39 to 58; it reads DKKKKDKKDKKERKEKKEKK. Positions 81–91 are enriched in basic and acidic residues; the sequence is SEPKPEKEKKE. The segment covering 92–102 has biased composition (basic residues); that stretch reads KNNKKDKKDKK. Polar residues predominate over residues 127-139; it reads AATTTPNGSAQRN. Positions 182–209 match the Q motif motif; the sequence is IHFSHLPTSTLTSKKPFASFTAPTPIQA. The Helicase ATP-binding domain maps to 212 to 396; sequence WPFALSGRDV…EGFMIDPVKA (185 aa). Residue 225–232 participates in ATP binding; that stretch reads AETGSGKT. Residues 342 to 345 carry the DEAD box motif; that stretch reads DEAD. Residues 433–566 form the Helicase C-terminal domain; that stretch reads GKEQRLLELL…TEHDKSHSGS (134 aa).

This sequence belongs to the DEAD box helicase family. DDX5/DBP2 subfamily.

Its subcellular location is the nucleus. It is found in the nucleolus. It carries out the reaction ATP + H2O = ADP + phosphate + H(+). Its function is as follows. ATP-dependent RNA helicase required for 60S ribosomal subunit synthesis. Involved in efficient pre-rRNA processing, predominantly at site A3, which is necessary for the normal formation of 25S and 5.8S rRNAs. The polypeptide is ATP-dependent RNA helicase DBP3 (DBP3) (Chaetomium globosum (strain ATCC 6205 / CBS 148.51 / DSM 1962 / NBRC 6347 / NRRL 1970) (Soil fungus)).